The primary structure comprises 289 residues: Protein charybde (289 aa).

A disordered region spans residues Thr-119–Thr-142.

Belongs to the DDIT4 family.

It localises to the cytoplasm. Its function is as follows. Inhibits cell growth by regulating the Tor pathway upstream of the Tsc1-Tsc2 complex and downstream of Akt1. Acts as a cell death activator during head development. In Drosophila pseudoobscura pseudoobscura (Fruit fly), this protein is Protein charybde (chrb).